Reading from the N-terminus, the 223-residue chain is MOB-like protein phocein (223 aa).

Positions 92, 97, 110, 113, 119, 127, 169, and 174 each coordinate Zn(2+).

The protein belongs to the MOB1/phocein family. Part of the core of STRIPAK complexes composed of PP2A catalytic and scaffolding subunits, the striatins (PP2A regulatory subunits), the striatin-associated proteins MOB4, STRIP1 and STRIP2, PDCD10 and members of the STE20 kinases, such as STK24 and STK26.

The protein localises to the cytoplasm. It localises to the membrane. It is found in the golgi apparatus. Its subcellular location is the golgi stack membrane. Its function is as follows. Part of the striatin-interacting phosphatase and kinase (STRIPAK) complexes. STRIPAK complexes have critical roles in protein (de)phosphorylation and are regulators of multiple signaling pathways including Hippo, MAPK, nuclear receptor and cytoskeleton remodeling. Different types of STRIPAK complexes are involved in a variety of biological processes such as cell growth, differentiation, apoptosis, metabolism and immune regulation. The sequence is that of MOB-like protein phocein (MOB4) from Gallus gallus (Chicken).